Consider the following 464-residue polypeptide: Argininosuccinate lyase (464 aa).

Belongs to the lyase 1 family. Argininosuccinate lyase subfamily.

The protein localises to the cytoplasm. It catalyses the reaction 2-(N(omega)-L-arginino)succinate = fumarate + L-arginine. Its pathway is amino-acid biosynthesis; L-arginine biosynthesis; L-arginine from L-ornithine and carbamoyl phosphate: step 3/3. This Streptococcus suis (strain 98HAH33) protein is Argininosuccinate lyase.